Reading from the N-terminus, the 208-residue chain is Large ribosomal subunit protein uL3 (208 aa).

Q150 bears the N5-methylglutamine mark.

The protein belongs to the universal ribosomal protein uL3 family. As to quaternary structure, part of the 50S ribosomal subunit. Forms a cluster with proteins L14 and L19. In terms of processing, methylated by PrmB.

Its function is as follows. One of the primary rRNA binding proteins, it binds directly near the 3'-end of the 23S rRNA, where it nucleates assembly of the 50S subunit. This chain is Large ribosomal subunit protein uL3, found in Buchnera aphidicola subsp. Cinara cedri (strain Cc).